A 177-amino-acid chain; its full sequence is Protein Flattop (177 aa).

The disordered stretch occupies residues 113–177 (ILGKPHDPDS…TPGPQRPAKS (65 aa)). Basic and acidic residues predominate over residues 115 to 124 (GKPHDPDSQK). Positions 132-163 (TKTVQQARSPTIIPSSPAANLNSPDELQSSHP) are enriched in polar residues.

This sequence belongs to the Flattop family. As to quaternary structure, microtubule inner protein component of sperm flagellar doublet microtubules. Interacts with DLG3. Expressed in airway epithelial cells.

The protein resides in the cytoplasm. It is found in the cytoskeleton. Its subcellular location is the cilium basal body. The protein localises to the cell projection. It localises to the cilium. The protein resides in the apical cell membrane. It is found in the cilium axoneme. Its subcellular location is the flagellum axoneme. Functionally, microtubule inner protein (MIP) part of the dynein-decorated doublet microtubules (DMTs) in cilia axoneme. Acts as a regulator of cilium basal body docking and positioning in mono- and multiciliated cells. Regulates basal body docking and cilia formation in multiciliated lung cells. Regulates kinocilium positioning and stereocilia bundle morphogenesis in the inner ear. This Homo sapiens (Human) protein is Protein Flattop.